A 337-amino-acid chain; its full sequence is Holliday junction branch migration complex subunit RuvB (337 aa).

Positions 1-22 (MEDERITSAEVQSPDEENEELS) are disordered. Residues 1 to 184 (MEDERITSAE…FGIVEHMNYY (184 aa)) are large ATPase domain (RuvB-L). ATP contacts are provided by residues leucine 23, arginine 24, glycine 65, lysine 68, threonine 69, threonine 70, 131–133 (EDF), arginine 174, tyrosine 184, and arginine 221. Threonine 69 is a binding site for Mg(2+). Positions 185-255 (NEADLANIVR…LVSQSLKLLQ (71 aa)) are small ATPAse domain (RuvB-S). The head domain (RuvB-H) stretch occupies residues 258-337 (NRGLDRTDKK…LGLIDQYMNK (80 aa)). DNA-binding residues include arginine 313 and arginine 318.

It belongs to the RuvB family. In terms of assembly, homohexamer. Forms an RuvA(8)-RuvB(12)-Holliday junction (HJ) complex. HJ DNA is sandwiched between 2 RuvA tetramers; dsDNA enters through RuvA and exits via RuvB. An RuvB hexamer assembles on each DNA strand where it exits the tetramer. Each RuvB hexamer is contacted by two RuvA subunits (via domain III) on 2 adjacent RuvB subunits; this complex drives branch migration. In the full resolvosome a probable DNA-RuvA(4)-RuvB(12)-RuvC(2) complex forms which resolves the HJ.

The protein resides in the cytoplasm. It carries out the reaction ATP + H2O = ADP + phosphate + H(+). The RuvA-RuvB-RuvC complex processes Holliday junction (HJ) DNA during genetic recombination and DNA repair, while the RuvA-RuvB complex plays an important role in the rescue of blocked DNA replication forks via replication fork reversal (RFR). RuvA specifically binds to HJ cruciform DNA, conferring on it an open structure. The RuvB hexamer acts as an ATP-dependent pump, pulling dsDNA into and through the RuvAB complex. RuvB forms 2 homohexamers on either side of HJ DNA bound by 1 or 2 RuvA tetramers; 4 subunits per hexamer contact DNA at a time. Coordinated motions by a converter formed by DNA-disengaged RuvB subunits stimulates ATP hydrolysis and nucleotide exchange. Immobilization of the converter enables RuvB to convert the ATP-contained energy into a lever motion, pulling 2 nucleotides of DNA out of the RuvA tetramer per ATP hydrolyzed, thus driving DNA branch migration. The RuvB motors rotate together with the DNA substrate, which together with the progressing nucleotide cycle form the mechanistic basis for DNA recombination by continuous HJ branch migration. Branch migration allows RuvC to scan DNA until it finds its consensus sequence, where it cleaves and resolves cruciform DNA. The polypeptide is Holliday junction branch migration complex subunit RuvB (Pediococcus pentosaceus (strain ATCC 25745 / CCUG 21536 / LMG 10740 / 183-1w)).